The primary structure comprises 510 residues: MSKKPVALIILDGFGLREEEKGNAVAHAQKPNFDRYWNEFPHATLRADGENVGLPEGQMGNSEVGHLNIGAGRIVYQSLTRVNLSIREGDFFKNETFIKAMDHVKEKQSALHIYGLLSDGGIHSHIDHIYALLDMAKQQNVERVYVHGFLDGRDVGPTSAEVYLKGLQDKFDEVGLGKLATVHGRYYAMDRDKRWDRVEKSYRAMVYGEGPSYKNGLELLDDSYKNNIVDEFVIPSVITEEDGTPVATVKDDDAVIFCNFRPDRAIQLSQVFTNEDFRGFDRGEKMPKRLHFVCLTKFSETVKGFVAFKPTNLDNTLGEVLSQQNYTQLRIAETEKYPHVTFFFSGGREDEFPGEERILINSPKVATYDLKPEMSAYEVTDALVKEIEGEKHDVIILNFANPDMVGHSGMLEPTVKAIEAVDECLGRVVDALLQKGGAAIITADHGNADEVVTLDGKPMTAHTTNKVPVIVTEKGITLREDGILADLAPTVLDLLGADKPKEMTGKTLKQ.

A Mn(2+)-binding site is contributed by Asp-12. At Tyr-36 the chain carries Phosphotyrosine. Ser-62 is a binding site for Mn(2+). The active-site Phosphoserine intermediate is the Ser-62. Substrate-binding positions include His-123, 153 to 154 (RD), Arg-185, Arg-191, 261 to 264 (RPDR), and Lys-336. Residues Asp-403, His-407, Asp-444, His-445, and His-462 each coordinate Mn(2+).

It belongs to the BPG-independent phosphoglycerate mutase family. Monomer. Mn(2+) is required as a cofactor.

The enzyme catalyses (2R)-2-phosphoglycerate = (2R)-3-phosphoglycerate. The protein operates within carbohydrate degradation; glycolysis; pyruvate from D-glyceraldehyde 3-phosphate: step 3/5. Its function is as follows. Essential for rapid growth and for sporulation. Catalyzes the interconversion of 2-phosphoglycerate and 3-phosphoglycerate. The polypeptide is 2,3-bisphosphoglycerate-independent phosphoglycerate mutase (Shouchella clausii (strain KSM-K16) (Alkalihalobacillus clausii)).